Consider the following 143-residue polypeptide: Protein SLC31A2 (143 aa).

At 1 to 22 the chain is on the extracellular side; it reads MAMHFIFSDTAVLLFDFWSVHS. The helical transmembrane segment at 23–43 threads the bilayer; the sequence is PAGMALSVLVLLLLAVLYEGI. Residues 44–93 are Cytoplasmic-facing; it reads KVGKAKLLNQVLVNLPTSISQQTIAETDGDSAGSDSFPVGRTHHRWYLCH. Position 77 is a phosphoserine (Ser-77). A helical membrane pass occupies residues 94–114; that stretch reads FGQSLIHVIQVVIGYFIMLAV. Residues 115–119 lie on the Extracellular side of the membrane; it reads MSYNT. The chain crosses the membrane as a helical span at residues 120–140; the sequence is WIFLGVVLGSAVGYYLAYPLL. Topologically, residues 141 to 143 are cytoplasmic; that stretch reads STA.

It belongs to the copper transporter (Ctr) (TC 1.A.56) family. SLC31A subfamily. As to quaternary structure, oligomer. Interacts with SLC31A1; this interaction stabilizes SLC31A2 and protects it from ubiquitination and the subsequent degradation. Ubiquitinated; ubiquitination and the subsequent proteasomal degradation are prevent by SLC31A1 that stabilizes it. Ubiquitous with high expression in placenta and heart.

It is found in the membrane. The protein localises to the cytoplasmic vesicle membrane. It localises to the late endosome membrane. The protein resides in the lysosome membrane. Does not function as a copper(1+) importer in vivo. However, in vitro functions as a low-affinity copper(1+) importer. Regulator of SLC31A1 which facilitates the cleavage of the SLC31A1 ecto-domain or which stabilizes the truncated form of SLC31A1 (Truncated CTR1 form), thereby drives the SLC31A1 truncated form-dependent endosomal copper export and modulates the copper and cisplatin accumulation via SLC31A1. The chain is Protein SLC31A2 from Homo sapiens (Human).